The sequence spans 36 residues: Cytochrome b6-f complex subunit 7 (36 aa).

Residues 5 to 25 (IFFVAGLVFVLTLVGMAIGFG) form a helical membrane-spanning segment.

The protein belongs to the PetM family. In terms of assembly, the 4 large subunits of the cytochrome b6-f complex are cytochrome b6, subunit IV (17 kDa polypeptide, PetD), cytochrome f and the Rieske protein, while the 4 small subunits are PetG, PetL, PetM and PetN. The complex functions as a dimer.

Its subcellular location is the cell inner membrane. Its function is as follows. Component of the cytochrome b6-f complex, which mediates electron transfer between photosystem II (PSII) and photosystem I (PSI), cyclic electron flow around PSI, and state transitions. The chain is Cytochrome b6-f complex subunit 7 from Gloeobacter violaceus (strain ATCC 29082 / PCC 7421).